Here is a 436-residue protein sequence, read N- to C-terminus: Putative ankyrin repeat protein FPV026 (436 aa).

ANK repeat units lie at residues 63 to 92, 101 to 130, 135 to 164, 168 to 197, 201 to 230, and 234 to 266; these read EGIR…NVNE, TCYS…DVNN, LRNT…DQNI, NGNI…NLEI, NGRT…LVDS, and EGYT…FLNI. The region spanning 409-436 is the F-box domain; that stretch reads TSTITNLPYEVIYIIVEKMTNKELCEIR.

In Fowlpox virus (strain NVSL) (FPV), this protein is Putative ankyrin repeat protein FPV026.